The primary structure comprises 202 residues: MEHYISLFVKSVFIENMALAFFLGMCTFIAISKKVETAIGLGIAVVVVQAITVPANNLLYAYLLKEGALAWAGLPDIDLSFLGFLSYIGVIAAIVQILEMLLDKYVPSLYNALGIYLPLITVNCAIMAGSLFMVERDYNFPESVVYGIGSGFSWALAIALLAGIREKLKYSDVPEGLQGLGIAFITIGLMSLGFMSFSGIQL.

Transmembrane regions (helical) follow at residues Ser11 to Ile31, Val35 to Ala55, Phe81 to Leu101, Gly114 to Val134, Val144 to Ile164, and Leu180 to Ile200.

Belongs to the NqrDE/RnfAE family. Composed of six subunits; NqrA, NqrB, NqrC, NqrD, NqrE and NqrF.

The protein localises to the cell inner membrane. It carries out the reaction a ubiquinone + n Na(+)(in) + NADH + H(+) = a ubiquinol + n Na(+)(out) + NAD(+). In terms of biological role, NQR complex catalyzes the reduction of ubiquinone-1 to ubiquinol by two successive reactions, coupled with the transport of Na(+) ions from the cytoplasm to the periplasm. NqrA to NqrE are probably involved in the second step, the conversion of ubisemiquinone to ubiquinol. The protein is Na(+)-translocating NADH-quinone reductase subunit E of Azotobacter vinelandii (strain DJ / ATCC BAA-1303).